The sequence spans 443 residues: Xaa-Pro dipeptidase (443 aa).

Mn(2+)-binding residues include Asp246, Asp257, His339, Glu384, and Glu423.

The protein belongs to the peptidase M24B family. Bacterial-type prolidase subfamily. The cofactor is Mn(2+).

It catalyses the reaction Xaa-L-Pro dipeptide + H2O = an L-alpha-amino acid + L-proline. Functionally, splits dipeptides with a prolyl residue in the C-terminal position. The polypeptide is Xaa-Pro dipeptidase (Enterobacter sp. (strain 638)).